The sequence spans 349 residues: Dihydroorotase (349 aa).

Zn(2+) is bound by residues histidine 17 and histidine 19. Residues 19-21 (HLR) and asparagine 45 each bind substrate. Zn(2+)-binding residues include lysine 105, histidine 142, and histidine 180. Lysine 105 bears the N6-carboxylysine mark. Histidine 142 provides a ligand contact to substrate. Leucine 225 contacts substrate. A Zn(2+)-binding site is contributed by aspartate 253. Aspartate 253 is a catalytic residue. Residues histidine 257 and alanine 269 each coordinate substrate.

It belongs to the metallo-dependent hydrolases superfamily. DHOase family. Class II DHOase subfamily. As to quaternary structure, homodimer. The cofactor is Zn(2+).

It catalyses the reaction (S)-dihydroorotate + H2O = N-carbamoyl-L-aspartate + H(+). It participates in pyrimidine metabolism; UMP biosynthesis via de novo pathway; (S)-dihydroorotate from bicarbonate: step 3/3. Functionally, catalyzes the reversible cyclization of carbamoyl aspartate to dihydroorotate. In Nitrosomonas europaea (strain ATCC 19718 / CIP 103999 / KCTC 2705 / NBRC 14298), this protein is Dihydroorotase.